The sequence spans 62 residues: Agnoprotein (62 aa).

At 1-23 (MVLRRLSRQASVKVRRSWTESKK) the chain is on the cytoplasmic side. Residues 24 to 40 (TAQRLFVFVLELLLQFC) traverse the membrane as a helical; Signal-anchor for type II membrane protein segment. The Extracellular segment spans residues 41 to 62 (EGEDTVDGKRKKPERLTEKPES).

The protein belongs to the polyomaviruses agnoprotein family. As to quaternary structure, homooligomer. Interacts with VP1. Interacts with large T antigen; this interaction may impact upon the activity of T-antigen on the control of viral gene transcription and replication. Interacts with small t antigen. Interacts with host CBX5; this interaction induces the dissociation of CBX5 from LBR, resulting in destabilization of the nuclear envelope. In terms of processing, phosphorylated by host kinase. Phosphorylation segregates agnoprotein in cytoplasm, whereas unphosphorylated agnoprotein migrate to the nucleus.

It is found in the host cytoplasm. The protein localises to the host nucleus membrane. It localises to the host rough endoplasmic reticulum membrane. The protein resides in the host cell membrane. Alters the structure of the nuclear envelope by interacting with host CBX5 and disrupting CBX5 association with LBR. Involved in the perinuclear-nuclear localization of the capsid protein VP1 during virion assembly and maturation. Plays an important role in the release of progeny virions from infected cells and in viral propagation, probably by acting as a viral ionic channel in the host plasma membrane. Allows influx of extracellular calcium ions in the host cell. May contribute to viral genome transcription and translation of viral late proteins. The polypeptide is Agnoprotein (Simian virus 40 (SV40)).